Consider the following 372-residue polypeptide: Phospho-2-dehydro-3-deoxyheptonate aldolase, tyrosine-inhibited (372 aa).

The protein belongs to the class-I DAHP synthase family.

It is found in the cytoplasm. Its subcellular location is the nucleus. The catalysed reaction is D-erythrose 4-phosphate + phosphoenolpyruvate + H2O = 7-phospho-2-dehydro-3-deoxy-D-arabino-heptonate + phosphate. Its pathway is metabolic intermediate biosynthesis; chorismate biosynthesis; chorismate from D-erythrose 4-phosphate and phosphoenolpyruvate: step 1/7. Stereospecific condensation of phosphoenolpyruvate (PEP) and D-erythrose-4-phosphate (E4P) giving rise to 3-deoxy-D-arabino-heptulosonate-7-phosphate (DAHP). The chain is Phospho-2-dehydro-3-deoxyheptonate aldolase, tyrosine-inhibited (aro4) from Schizosaccharomyces pombe (strain 972 / ATCC 24843) (Fission yeast).